The primary structure comprises 181 residues: ADP-ribosylation factor 1 (181 aa).

Glycine 2 is lipidated: N-myristoyl glycine. GTP contacts are provided by residues 24 to 31 (GLDAAGKT), 67 to 71 (DVGGQ), and 126 to 129 (NKQD).

This sequence belongs to the small GTPase superfamily. Arf family. As to expression, seedling shoots.

The protein resides in the golgi apparatus. It catalyses the reaction GTP + H2O = GDP + phosphate + H(+). Functionally, GTP-binding protein involved in protein trafficking; may modulate vesicle budding and uncoating within the Golgi apparatus. In Oryza sativa subsp. japonica (Rice), this protein is ADP-ribosylation factor 1.